The sequence spans 326 residues: MAFISFPPRHPSSSARLPLTLIALDDWALSTITGVDSEKYIQGQVTADVSQMTEQQHLLAAHCDAKGKMWSTLRLFRERDGFAWIERRSVLEAQLTELKKYAVFSKVVIAPDDERVLLGVAGFQARAALANVFSVLPNSENQVVRDGASTLLWFEHPAERFLLVTDVATANMLTEKLHGEAELNNSQQWLALDIEAGIPAIDAANSGQFIPQATNLQALGGISFKKGCYTGQEMVARAKFRGANKRALWLLAGKASRVPEAGEDLELQMGENWRRTGAILAATQLDDGQLLVQAVMNNDLEAESVFRVRDDANTLHIVPLPYSLEE.

The folate site is built by tryptophan 27 and tryptophan 189.

This sequence belongs to the tRNA-modifying YgfZ family.

The protein localises to the cytoplasm. Functionally, folate-binding protein involved in regulating the level of ATP-DnaA and in the modification of some tRNAs. It is probably a key factor in regulatory networks that act via tRNA modification, such as initiation of chromosomal replication. The polypeptide is tRNA-modifying protein YgfZ (Salmonella paratyphi C (strain RKS4594)).